The chain runs to 708 residues: Lactotransferrin (708 aa).

The first 19 residues, 1–19, serve as a signal peptide directing secretion; that stretch reads MKLLFLALLSLLALGPSLA. 2 Transferrin-like domains span residues 25-352 and 364-693; these read VRWC…NLKE and VVWC…NLRQ. 2 disulfide bridges follow: C28–C64 and C38–C55. D79 serves as a coordination point for Fe(3+). The active site involves R92. Y111 is a Fe(3+) binding site. 5 cysteine pairs are disulfide-bonded: C134–C217, C176–C192, C179–C202, C189–C200, and C250–C264. Residue T136 participates in hydrogencarbonate binding. N139 carries an N-linked (GlcNAc...) asparagine glycan. Residues R140, A142, and G143 each coordinate hydrogencarbonate. Position 211 (Y211) interacts with Fe(3+). Fe(3+) is bound at residue H272. S278 serves as the catalytic Nucleophile. Disulfide bonds link C367/C399 and C377/C390. The N-linked (GlcNAc...) asparagine glycan is linked to N385. Fe(3+)-binding residues include D414 and D452. 4 cysteine pairs are disulfide-bonded: C476–C551, C510–C524, C521–C534, and C592–C606. Hydrogencarbonate-binding residues include T478, R482, A484, and G485. N495 is a glycosylation site (N-linked (GlcNAc...) asparagine). Y545 lines the Fe(3+) pocket. Position 614 (H614) interacts with Fe(3+).

The protein belongs to the transferrin family. Monomer. Found in a complex with LTF, CLU, EPPIN and SEMG1. Interacts with prey activated coagulation factor X; the interaction inhibits coagulation factor X catalytic activity. Found in a complex with MPO and LTF; interacts directly with CP, allows Fe(3+) incorporation into LTF and activation of CP ferroxidase activity. In terms of processing, N-glycosylated. Glycosylation is important for draculin anticoagulant activity. Probably also O-glycosylated. In terms of tissue distribution, expressed in the submaxillary gland and secreted in the saliva (at protein level).

The protein resides in the secreted. Its function is as follows. Transferrins are iron binding transport proteins which can bind two Fe(3+) ions in association with the binding of an anion, usually bicarbonate. Functionally, major iron-binding and multifunctional protein found in exocrine fluids such as breast milk and mucosal secretions. Has antimicrobial activity. Antimicrobial properties may include bacteriostasis, which is related to its ability to sequester free iron and thus inhibit microbial growth, as well as direct bactericidal properties leading to the release of lipopolysaccharides from the bacterial outer membrane. May have anabolic, differentiating and anti-apoptotic effects on osteoblasts and may also inhibit osteoclastogenesis, possibly playing a role in the regulation of bone growth. May interfere with the lipopolysaccharide (LPS)-stimulated TLR4 signaling. In terms of biological role, the lactotransferrin transferrin-like domain 1 functions as a serine protease of the peptidase S60 family that cuts arginine rich regions. This function contributes to the antimicrobial activity. Shows a preferential cleavage at -Arg-Ser-Arg-Arg-|- and -Arg-Arg-Ser-Arg-|-, and of Z-Phe-Arg-|-aminomethylcoumarin sites. Acts as an anticoagulant of the blood coagulation cascade of the bat's prey by inhibiting coagulation factor IX and activated coagulation factor X. This Desmodus rotundus (Vampire bat) protein is Lactotransferrin.